We begin with the raw amino-acid sequence, 223 residues long: Large ribosomal subunit protein uL4c (223 aa).

The segment at 61–96 (TKTRSEVEGGGKKPWKQKGTGNARAGSSNSPLWKGG) is disordered.

The protein belongs to the universal ribosomal protein uL4 family. In terms of assembly, part of the 50S ribosomal subunit.

The protein resides in the plastid. The protein localises to the chloroplast. In terms of biological role, probably binds the 23S rRNA. In Guillardia theta (Cryptophyte), this protein is Large ribosomal subunit protein uL4c (rpl4).